Reading from the N-terminus, the 96-residue chain is ATP synthase subunit c (96 aa).

The next 2 helical transmembrane spans lie at 24 to 44 (HVGA…VGVG) and 75 to 95 (AIAE…IFVA).

The protein belongs to the ATPase C chain family. As to quaternary structure, F-type ATPases have 2 components, F(1) - the catalytic core - and F(0) - the membrane proton channel. F(1) has five subunits: alpha(3), beta(3), gamma(1), delta(1), epsilon(1). F(0) has three main subunits: a(1), b(2) and c(10-14). The alpha and beta chains form an alternating ring which encloses part of the gamma chain. F(1) is attached to F(0) by a central stalk formed by the gamma and epsilon chains, while a peripheral stalk is formed by the delta and b chains.

Its subcellular location is the cell membrane. In terms of biological role, f(1)F(0) ATP synthase produces ATP from ADP in the presence of a proton or sodium gradient. F-type ATPases consist of two structural domains, F(1) containing the extramembraneous catalytic core and F(0) containing the membrane proton channel, linked together by a central stalk and a peripheral stalk. During catalysis, ATP synthesis in the catalytic domain of F(1) is coupled via a rotary mechanism of the central stalk subunits to proton translocation. Functionally, key component of the F(0) channel; it plays a direct role in translocation across the membrane. A homomeric c-ring of between 10-14 subunits forms the central stalk rotor element with the F(1) delta and epsilon subunits. This is ATP synthase subunit c from Mycoplasmoides gallisepticum (strain R(low / passage 15 / clone 2)) (Mycoplasma gallisepticum).